A 391-amino-acid chain; its full sequence is Ammonium transporter Amt1 (391 aa).

10 consecutive transmembrane segments (helical) span residues 12 to 32 (VFFF…FIAL), 51 to 71 (LDLA…SYGF), 88 to 108 (AWWM…TGGV), 112 to 132 (IKIL…YPIV), 152 to 172 (AGSG…AYVL), 192 to 212 (IPIA…FNIG), 223 to 243 (LASV…GGAL), 261 to 281 (VAVC…VGLL), 305 to 325 (IGPV…IPFL), and 338 to 358 (GQII…LIIY).

The protein belongs to the ammonia transporter channel (TC 1.A.11.2) family. As to quaternary structure, homotrimer. Interacts and forms a complex with GlnK1.

The protein resides in the cell membrane. Activity is regulated by the nitrogen regulatory protein GlnK1 via direct interaction. Formation of the GlnK1/Amt1 complex is decreased in the presence of Mg-ATP or 2-oxoglutarate. The presence of both effectors abolishes the formation of the complex. Involved in the uptake of ammonium/ammonia (NH(4)(+)/NH(3)). Transport is electrogenic. The chain is Ammonium transporter Amt1 from Methanocaldococcus jannaschii (strain ATCC 43067 / DSM 2661 / JAL-1 / JCM 10045 / NBRC 100440) (Methanococcus jannaschii).